The sequence spans 225 residues: 2-C-methyl-D-erythritol 4-phosphate cytidylyltransferase (225 aa).

Belongs to the IspD/TarI cytidylyltransferase family. IspD subfamily.

It catalyses the reaction 2-C-methyl-D-erythritol 4-phosphate + CTP + H(+) = 4-CDP-2-C-methyl-D-erythritol + diphosphate. It functions in the pathway isoprenoid biosynthesis; isopentenyl diphosphate biosynthesis via DXP pathway; isopentenyl diphosphate from 1-deoxy-D-xylulose 5-phosphate: step 2/6. Its function is as follows. Catalyzes the formation of 4-diphosphocytidyl-2-C-methyl-D-erythritol from CTP and 2-C-methyl-D-erythritol 4-phosphate (MEP). The polypeptide is 2-C-methyl-D-erythritol 4-phosphate cytidylyltransferase (Prochlorococcus marinus (strain NATL2A)).